The sequence spans 83 residues: Acyl carrier protein MmaB (83 aa).

The Carrier domain occupies 3-83 (DPVRQRILLA…LSQSELESPT (81 aa)). Ser-39 is modified (O-(pantetheine 4'-phosphoryl)serine).

Belongs to the acyl carrier protein (ACP) family. Requires pantetheine 4'-phosphate as cofactor.

It participates in lipid metabolism; fatty acid metabolism. Acyl-carrier protein (ACP) involved in the biosynthesis of a unique class of isonitrile lipopeptides (INLPs) that seem to play a role in metal acquisition in M.marinum. Is the dedicated ACP for the loading of activated acyl groups catalyzed by MmaC. The polypeptide is Acyl carrier protein MmaB (Mycobacterium marinum (strain ATCC BAA-535 / M)).